Here is a 157-residue protein sequence, read N- to C-terminus: Snaclec 3 (157 aa).

Residues 1-23 form the signal peptide; the sequence is MGRLIFLSFGWLVVFLSLSGTGA. 3 cysteine pairs are disulfide-bonded: cysteine 27/cysteine 38, cysteine 55/cysteine 153, and cysteine 128/cysteine 145. In terms of domain architecture, C-type lectin spans 34 to 154; that stretch reads YGQHCYRAFS…CAGHYPFICK (121 aa).

This sequence belongs to the snaclec family. In terms of assembly, heterodimer; disulfide-linked. As to expression, expressed by the venom gland.

The protein localises to the secreted. Its function is as follows. Interferes with one step of hemostasis (modulation of platelet aggregation, or coagulation cascade, for example). This Bitis gabonica (Gaboon adder) protein is Snaclec 3.